The chain runs to 578 residues: Membrane protein insertase YidC (578 aa).

The helical transmembrane segment at 7–27 (FLAIAISLGILLGFQGLYRHF) threads the bilayer. A disordered region spans residues 35–70 (ARTATNAGQGKPNNTLGAVPTDATASQSPPPKEGAR). Over residues 37–50 (TATNAGQGKPNNTL) the composition is skewed to polar residues. The next 4 membrane-spanning stretches (helical) occupy residues 362–382 (LVGN…AAFY), 436–456 (LPML…FVTI), 491–511 (HISP…TMYL), and 530–550 (FMPI…VIYW).

Belongs to the OXA1/ALB3/YidC family. Type 1 subfamily. Interacts with the Sec translocase complex via SecD. Specifically interacts with transmembrane segments of nascent integral membrane proteins during membrane integration.

The protein resides in the cell inner membrane. In terms of biological role, required for the insertion and/or proper folding and/or complex formation of integral membrane proteins into the membrane. Involved in integration of membrane proteins that insert both dependently and independently of the Sec translocase complex, as well as at least some lipoproteins. Aids folding of multispanning membrane proteins. The polypeptide is Membrane protein insertase YidC (Granulibacter bethesdensis (strain ATCC BAA-1260 / CGDNIH1)).